Reading from the N-terminus, the 230-residue chain is Ureidoacrylate amidohydrolase RutB (230 aa).

The active-site Proton acceptor is the aspartate 23. Lysine 132 is a catalytic residue. Cysteine 165 serves as the catalytic Nucleophile.

The protein belongs to the isochorismatase family. RutB subfamily.

The enzyme catalyses (Z)-3-ureidoacrylate + H2O + H(+) = (Z)-3-aminoacrylate + NH4(+) + CO2. It catalyses the reaction (Z)-3-ureidoacrylate + H2O = (Z)-3-aminoacrylate + carbamate + H(+). The catalysed reaction is (Z)-2-methylureidoacrylate + H2O + H(+) = (Z)-2-methylaminoacrylate + NH4(+) + CO2. In terms of biological role, hydrolyzes ureidoacrylate to form aminoacrylate and carbamate. The carbamate hydrolyzes spontaneously, thereby releasing one of the nitrogen atoms of the pyrimidine ring as ammonia and one of its carbon atoms as CO2. This Yersinia enterocolitica serotype O:8 / biotype 1B (strain NCTC 13174 / 8081) protein is Ureidoacrylate amidohydrolase RutB.